Here is a 344-residue protein sequence, read N- to C-terminus: Interferon gamma receptor 1-like (344 aa).

An N-terminal signal peptide occupies residues 1 to 22 (MSKHAVVQFGVVYALLFPGVFG). The Extracellular segment spans residues 23–229 (FVPSPTNVSV…QPTPETDKTG (207 aa)). One can recognise a Fibronectin type-III domain in the interval 24–102 (VPSPTNVSVV…TAHDGQEKSE (79 aa)). Asparagine 29, asparagine 44, asparagine 132, and asparagine 189 each carry an N-linked (GlcNAc...) asparagine glycan. The helical transmembrane segment at 230–250 (IIAALIGGATVVLFIIMGFVW) threads the bilayer. The Cytoplasmic portion of the chain corresponds to 251-344 (LLWRKWSNIP…SSDYDRPKFL (94 aa)). The disordered stretch occupies residues 300-344 (TEEDQSVSARDDTGADPPVVSEEGMAGEDSQGLGCSSDYDRPKFL).

It belongs to the type II cytokine receptor family. In terms of tissue distribution, highly expressed in brain. Also detected in spleen, heart, intestine, gill and kidney. In immune cell populations, detected at low levels in monocytes, peripheral blood leukocytes, splenocytes, neutrophils and mature macrophages.

Its subcellular location is the cell membrane. Functionally, receptor which shows binding specificity for the cytokine ifng1 (interferon gamma 1). This chain is Interferon gamma receptor 1-like, found in Carassius auratus (Goldfish).